A 143-amino-acid polypeptide reads, in one-letter code: Large-conductance mechanosensitive channel (143 aa).

The next 2 helical transmembrane spans lie at 10–30 and 89–109; these read FAVK…GAFS and GSFI…FLMV.

This sequence belongs to the MscL family. In terms of assembly, homopentamer.

It localises to the cell inner membrane. Functionally, channel that opens in response to stretch forces in the membrane lipid bilayer. May participate in the regulation of osmotic pressure changes within the cell. This is Large-conductance mechanosensitive channel from Burkholderia pseudomallei (strain 668).